The following is a 577-amino-acid chain: Beta-fructofuranosidase, insoluble isoenzyme 1 (577 aa).

The signal sequence occupies residues Met-1–Ala-22. Asp-63 is an active-site residue. Residues Asn-158, Asn-183, and Asn-333 are each glycosylated (N-linked (GlcNAc...) asparagine).

Belongs to the glycosyl hydrolase 32 family.

It is found in the secreted. The protein resides in the extracellular space. Its subcellular location is the apoplast. The protein localises to the cell wall. It catalyses the reaction Hydrolysis of terminal non-reducing beta-D-fructofuranoside residues in beta-D-fructofuranosides.. Its function is as follows. May play a role in sucrose partitioning during seed development and in stress response. The protein is Beta-fructofuranosidase, insoluble isoenzyme 1 (CIN1) of Oryza sativa subsp. indica (Rice).